A 165-amino-acid polypeptide reads, in one-letter code: C-phycoerythrin class 2 subunit alpha (165 aa).

The phycourobilin site is built by cysteine 75, cysteine 83, and cysteine 140.

It belongs to the phycobiliprotein family. As to quaternary structure, heterodimer of an alpha and a beta chain. Post-translationally, contains three covalently linked phycourobilin chromophores.

It localises to the cellular thylakoid membrane. Its function is as follows. Light-harvesting photosynthetic bile pigment-protein from the phycobiliprotein complex. This chain is C-phycoerythrin class 2 subunit alpha (mpeA), found in Synechococcus sp. (strain WH8103).